We begin with the raw amino-acid sequence, 465 residues long: Probable citrate synthase, mitochondrial (465 aa).

Catalysis depends on residues histidine 303, histidine 349, and aspartate 404.

It belongs to the citrate synthase family. In terms of assembly, homodimer.

The protein localises to the mitochondrion matrix. The catalysed reaction is oxaloacetate + acetyl-CoA + H2O = citrate + CoA + H(+). It functions in the pathway carbohydrate metabolism; tricarboxylic acid cycle; isocitrate from oxaloacetate: step 1/2. The polypeptide is Probable citrate synthase, mitochondrial (Glossina morsitans morsitans (Savannah tsetse fly)).